The following is a 183-amino-acid chain: Small ribosomal subunit protein cS23y (183 aa).

The protein belongs to the chloroplast-specific ribosomal protein cS23 family. As to quaternary structure, part of the 30S ribosomal subunit.

It localises to the plastid. The protein resides in the chloroplast. Component of the chloroplast ribosome (chloro-ribosome), a dedicated translation machinery responsible for the synthesis of chloroplast genome-encoded proteins, including proteins of the transcription and translation machinery and components of the photosynthetic apparatus. The chain is Small ribosomal subunit protein cS23y from Arabidopsis thaliana (Mouse-ear cress).